We begin with the raw amino-acid sequence, 920 residues long: WD repeat-containing protein 47 (920 aa).

Residues Lys-10–Asn-42 form the LisH domain. A CTLH domain is found at Phe-45–Ser-102. Thr-285 bears the Phosphothreonine mark. Phosphoserine occurs at positions 289, 292, 297, and 312. Over residues Tyr-371–Thr-380 the composition is skewed to basic and acidic residues. The interval Tyr-371–Asp-422 is disordered. Ser-423 is subject to Phosphoserine. A disordered region spans residues Leu-501 to Ser-594. The segment covering Ser-506–Thr-523 has biased composition (low complexity). Over residues Asn-538–His-552 the composition is skewed to polar residues. Thr-543 is subject to Phosphothreonine. WD repeat units lie at residues Glu-605–Ala-644, His-660–Thr-699, Met-707–Leu-749, Gly-754–Val-792, Gly-799–Ser-838, Pro-841–Leu-880, and Glu-887–Ser-919.

As to quaternary structure, interacts with MAP1S (via WD repeats). Enriched in the nervous system (at protein level).

The protein resides in the cytoplasm. It is found in the cytoskeleton. The chain is WD repeat-containing protein 47 (Wdr47) from Mus musculus (Mouse).